The chain runs to 324 residues: tRNA dimethylallyltransferase (324 aa).

Residue 17–24 (GPTASGKT) coordinates ATP. Residue 19–24 (TASGKT) coordinates substrate. Interaction with substrate tRNA stretches follow at residues 42-45 (DSAL), 166-170 (QRIQR), and 251-256 (RCVGYR).

Belongs to the IPP transferase family. As to quaternary structure, monomer. Mg(2+) is required as a cofactor.

It carries out the reaction adenosine(37) in tRNA + dimethylallyl diphosphate = N(6)-dimethylallyladenosine(37) in tRNA + diphosphate. Its function is as follows. Catalyzes the transfer of a dimethylallyl group onto the adenine at position 37 in tRNAs that read codons beginning with uridine, leading to the formation of N6-(dimethylallyl)adenosine (i(6)A). The chain is tRNA dimethylallyltransferase from Burkholderia mallei (strain NCTC 10247).